The chain runs to 423 residues: Type II methyltransferase M.NgoBV (423 aa).

The region spanning 4–423 (IKFIDLFSGM…AVSERLLHTL (420 aa)) is the SAM-dependent MTase C5-type domain. Cysteine 80 is a catalytic residue.

It belongs to the class I-like SAM-binding methyltransferase superfamily. C5-methyltransferase family.

It catalyses the reaction a 2'-deoxycytidine in DNA + S-adenosyl-L-methionine = a 5-methyl-2'-deoxycytidine in DNA + S-adenosyl-L-homocysteine + H(+). Its function is as follows. A methylase, recognizes the double-stranded sequence 5'-GGNNCC-3', methylates C-5 on both strands, and protects the DNA from cleavage by the NgoBV endonuclease. The chain is Type II methyltransferase M.NgoBV (ngoBVM) from Neisseria gonorrhoeae.